We begin with the raw amino-acid sequence, 427 residues long: Enolase (427 aa).

Residue Gln-164 participates in (2R)-2-phosphoglycerate binding. Glu-206 serves as the catalytic Proton donor. Residues Asp-243, Glu-284, and Asp-311 each coordinate Mg(2+). Lys-336, Arg-365, Ser-366, and Lys-387 together coordinate (2R)-2-phosphoglycerate. Catalysis depends on Lys-336, which acts as the Proton acceptor.

It belongs to the enolase family. The cofactor is Mg(2+).

The protein resides in the cytoplasm. It is found in the secreted. Its subcellular location is the cell surface. It catalyses the reaction (2R)-2-phosphoglycerate = phosphoenolpyruvate + H2O. It participates in carbohydrate degradation; glycolysis; pyruvate from D-glyceraldehyde 3-phosphate: step 4/5. In terms of biological role, catalyzes the reversible conversion of 2-phosphoglycerate (2-PG) into phosphoenolpyruvate (PEP). It is essential for the degradation of carbohydrates via glycolysis. In Synechococcus sp. (strain JA-2-3B'a(2-13)) (Cyanobacteria bacterium Yellowstone B-Prime), this protein is Enolase.